The chain runs to 279 residues: Ribonuclease T2 protein rnst-2 (279 aa).

The signal sequence occupies residues 1–17 (MKLLLLLCISCIPLAYS). A disulfide bridge connects residues C37 and C48. H60 is a catalytic residue. N68 carries an N-linked (GlcNAc...) asparagine glycan. Active-site residues include E114 and H118. C200 and C210 are oxidised to a cystine.

It belongs to the RNase T2 family. In terms of tissue distribution, expressed in the pharynx, hypodermis, muscle cells, sheath cells, intestinal cells, the vulva and tail regions.

Its subcellular location is the lysosome. The catalysed reaction is a ribonucleotidyl-ribonucleotide-RNA + H2O = a 3'-end 3'-phospho-ribonucleotide-RNA + a 5'-end dephospho-ribonucleoside-RNA + H(+). Functionally, probable endoribonuclease involved in the autophagy-mediated degradation of ribosomal RNA and ribosomal proteins in lysosomes. In Caenorhabditis elegans, this protein is Ribonuclease T2 protein rnst-2.